A 29-amino-acid polypeptide reads, in one-letter code: Small toxic protein ZorO (29 aa).

The helical transmembrane segment at 10–27 threads the bilayer; it reads VLIAVLELLVALLRLIDL.

It is found in the cell inner membrane. Its function is as follows. Toxic component of a type I toxin-antitoxin (TA) system. Expression in the absence of its cognate antitoxin (small sRNA orzO) leads to cell stasis and a decrease in colony-forming units. Repression of ZorO toxicity requires base pairing between zorO mRNA and sRNA OrzO, as well as RNase III (rnc), suggesting the mRNA is degraded. Base pairing occurs between 18 bases in the 5' UTR of zorO mRNA and the 5' end of OrzO sRNA. sRNA OrzP, which differs only in 4 of these 18 bases, does not repress ZorO toxicity. Integration of the protein into the inner membrane damages membrane integrity and affects membrane potential. It leads to increased levels of hydroxyl radicals. This chain is Small toxic protein ZorO, found in Escherichia coli O157:H7.